Consider the following 431-residue polypeptide: Histidinol dehydrogenase (431 aa).

NAD(+) is bound by residues tyrosine 127, glutamine 185, and asparagine 208. Substrate-binding residues include serine 234, glutamine 256, and histidine 259. 2 residues coordinate Zn(2+): glutamine 256 and histidine 259. Residues glutamate 323 and histidine 324 each act as proton acceptor in the active site. 4 residues coordinate substrate: histidine 324, aspartate 357, glutamate 411, and histidine 416. A Zn(2+)-binding site is contributed by aspartate 357. Histidine 416 contributes to the Zn(2+) binding site.

The protein belongs to the histidinol dehydrogenase family. Zn(2+) is required as a cofactor.

It catalyses the reaction L-histidinol + 2 NAD(+) + H2O = L-histidine + 2 NADH + 3 H(+). The protein operates within amino-acid biosynthesis; L-histidine biosynthesis; L-histidine from 5-phospho-alpha-D-ribose 1-diphosphate: step 9/9. Catalyzes the sequential NAD-dependent oxidations of L-histidinol to L-histidinaldehyde and then to L-histidine. The protein is Histidinol dehydrogenase of Vibrio cholerae serotype O1 (strain ATCC 39315 / El Tor Inaba N16961).